The following is a 373-amino-acid chain: RNA 3'-terminal phosphate cyclase-like protein (373 aa).

This sequence belongs to the RNA 3'-terminal cyclase family. Type 2 subfamily. As to quaternary structure, part of the small subunit (SSU) processome, composed of more than 70 proteins and the RNA chaperone small nucleolar RNA (snoRNA) U3. Interacts with BMS1.

Its subcellular location is the nucleus. It is found in the nucleolus. Functionally, as part of the small subunit (SSU) processome, it plays a role in 40S-ribosomal-subunit biogenesis in the early pre-rRNA processing steps at sites A0, A1 and A2 that are required for proper maturation of the 18S RNA. Activates BMS1 by promoting GDP/GTP exchange. Does not have cyclase activity. This is RNA 3'-terminal phosphate cyclase-like protein (RCL1) from Bos taurus (Bovine).